The sequence spans 4903 residues: Histone-lysine N-methyltransferase 2C (4903 aa).

Disordered regions lie at residues 1–116 (MSSE…SEES) and 159–202 (LTLP…PPQQ). The span at 13–28 (QPPPAPPEEPGAPAPS) shows a compositional bias: pro residues. Ser28 and Ser46 each carry phosphoserine. The a.T hook DNA-binding region spans 34-46 (KRPRGRPRKDGAS). The segment covering 50 to 59 (RARKKPRSRG) has biased composition (basic residues). Positions 64-81 (EDEDSMDGLETTETENIV) are enriched in acidic residues. Residues Ser89 and Ser113 each carry the phosphoserine modification. The segment covering 101–116 (SKQPVSALQRSVSEES) has biased composition (polar residues). Residues 226–261 (ELSLVGLPDAIDVQALFDSTGTCWAHHRCVEWSLGI) form a C2HC pre-PHD-type 1; degenerate zinc finger. 4 consecutive PHD-type zinc fingers follow at residues 282-330 (ERCA…PEHI), 340-390 (DANC…CKVC), 387-437 (CKVC…CRIC), and 463-519 (DNLC…CKHL). The RING-type zinc-finger motif lies at 343–388 (CAVCDSPGDLLDQFFCTTCGQHYHGMCLDIAVTPLKRAGWQCPECK). Residues 435 to 488 (RICIECGTRSSTQWHHNCLICDTCYQQQDNLCPFCGKCYHPELQKDMLHCNMCK) enclose the DHHC domain. A disordered region spans residues 671–703 (SEVASKELSPPKSAPETAAPEALLSPHSERSLS). At Lys751 the chain carries N6-acetyllysine. Over residues 824–835 (TKRKFSPGRPRS) the composition is skewed to basic residues. 2 disordered regions span residues 824–857 (TKRK…DTSE) and 882–904 (GFPG…GRSK). Residues 838 to 848 (GAWSNHNTVSP) show a composition bias toward polar residues. Ser847 carries the post-translational modification Phosphoserine. 3 consecutive PHD-type zinc fingers follow at residues 950–1003 (QDMC…CTVC), 1000–1050 (CTVC…CVWC), and 1077–1132 (LSSC…CRPY). The disordered stretch occupies residues 1208–1318 (AVLQTPPDIQ…PSRDDGWREQ (111 aa)). Residues 1217-1263 (QSEHSRDGEMDDSREGELMDCDGKSESSPEREAGDDETKGIEGTDAI) show a composition bias toward basic and acidic residues. A Phosphoserine modification is found at Ser1294. The span at 1309-1318 (PSRDDGWREQ) shows a compositional bias: basic and acidic residues. Residues 1330–1352 (VAENTDKIKKRYRKRKNKLEETF) adopt a coiled-coil conformation. Disordered regions lie at residues 1397-1419 (SDPL…ADDP) and 1447-1473 (HSDI…RPLT). Composition is skewed to polar residues over residues 1406 to 1415 (TSAKPGTQGT) and 1455 to 1471 (ADAS…SSRP). At Lys1497 the chain carries N6-acetyllysine. 2 disordered regions span residues 1594–1617 (NAIA…ENDT) and 1698–1757 (VQMS…AKIE). Over residues 1599 to 1617 (DPNSSWAPTTPSMEGENDT) the composition is skewed to polar residues. Residues 1707–1717 (RQQQQDSIDPS) show a composition bias toward low complexity. The span at 1718–1742 (SRIDSDLFKDPLKQRESEHEQEWKF) shows a compositional bias: basic and acidic residues. Residues 1743 to 1790 (RQQMRQKSKQQAKIEATQKLEQVKNEQQQQQQQQQQQQQQQLASQHLL) adopt a coiled-coil conformation. Position 1761 is an N6-acetyllysine (Lys1761). Residues 1791–2375 (VAPGSDTPSS…MSQADTEKLR (585 aa)) are disordered. Over residues 1796 to 1819 (DTPSSGAQSPLTPQAGNGNVSPAQ) the composition is skewed to polar residues. Low complexity predominate over residues 1855-1886 (PSRIPVQESLSQSQNSQPPSPQMFSPGSSHSR). A Phosphoserine modification is found at Ser1983. A compositionally biased stretch (polar residues) spans 1986–2001 (ISEQSTKGPLTTGTSD). Lys2005 bears the N6-acetyllysine mark. Polar residues-rich tracts occupy residues 2113 to 2124 (GTISRSASQDPY), 2137 to 2151 (SYSQ…NPDP), and 2325 to 2334 (GNFSTSSNLP). Residues 2335–2347 (VSSQGQQFSSVSQ) are compositionally biased toward low complexity. A compositionally biased stretch (polar residues) spans 2355-2369 (SGGTDTQNTVNMSQA). Asymmetric dimethylarginine occurs at positions 2447 and 2563. 3 disordered regions span residues 2561 to 2668 (RSRL…DNLE), 2702 to 2736 (KDLD…NDPN), and 2786 to 2844 (VEPK…GDAD). 3 stretches are compositionally biased toward polar residues: residues 2602 to 2611 (QPSQCLSNQL), 2621 to 2636 (PPSQ…QSSI), and 2653 to 2668 (PLST…DNLE). Over residues 2788-2807 (PKTRDQGDKTMVLEDKDLPQ) the composition is skewed to basic and acidic residues. N6-acetyllysine occurs at positions 2796 and 2803. Ser2822 carries the post-translational modification Phosphoserine. Residue Tyr2824 is modified to Phosphotyrosine. Over residues 2825–2843 (SKEEIQSEIKNHDDSRGDA) the composition is skewed to basic and acidic residues. 2 positions are modified to N6-acetyllysine: Lys2826 and Lys2862. Residues 2920–2953 (EKCDDSDIRPSGSSPPSLPISPSTHGSSLPPTLI) are disordered. The segment covering 2929–2942 (PSGSSPPSLPISPS) has biased composition (low complexity). Coiled-coil stretches lie at residues 3047–3074 (LLQD…QRSE) and 3166–3193 (NDSQ…YLEE). Over residues 3198–3214 (HRKSKKALSAKQRTAKK) the composition is skewed to basic residues. A disordered region spans residues 3198-3223 (HRKSKKALSAKQRTAKKAGREFPEED). Coiled-coil stretches lie at residues 3224–3270 (AEQL…QQCA) and 3387–3432 (FSES…QHCL). 2 disordered regions span residues 3329-3407 (PGWQ…QERQ) and 3444-3910 (SQMP…QKMA). Over residues 3391–3407 (FQERERKERLREQQERQ) the composition is skewed to basic and acidic residues. Over residues 3464–3485 (LQQSPQHQQQIGPVLQQQNVQQ) the composition is skewed to low complexity. Polar residues-rich tracts occupy residues 3486 to 3503 (GSVN…NEQR), 3515 to 3524 (PSASGGSPNF), 3557 to 3586 (PVAN…SLIQ), and 3632 to 3647 (LSET…PSEL). Basic and acidic residues-rich tracts occupy residues 3697-3739 (AEAD…KIKD) and 3795-3804 (SSTKDGKLIE). Lys3709 is subject to N6-acetyllysine. Residues 3871 to 3885 (MYSSSDSFTHLKQQN) show a composition bias toward polar residues. Over residues 3890-3904 (PPTPPASLPPTPPPM) the composition is skewed to pro residues. A Phosphoserine modification is found at Ser4027. Asymmetric dimethylarginine is present on Arg4132. Residues 4159–4184 (PNVPFPPTSNGLSGYKDSSHGPAEGA) form a disordered region. At Ser4260 the chain carries Phosphoserine. Residues 4391–4431 (CRKCCFCHEEGDGLTDGPARLLNLDLDLWVHLNCALWSTEV) form a C2HC pre-PHD-type 2 zinc finger. The segment at 4452–4499 (MKCVFCHKTGATSGCHRFRCTNIYHFTCATKAQCMFFKDKTMLCPMHK) adopts a PHD-type 8 zinc-finger fold. The FYR N-terminal domain maps to 4537-4597 (DHTFRVGSLI…CRYLCSIEEK (61 aa)). An FYR C-terminal domain is found at 4598 to 4683 (DGRPVFVIRI…EACENYTFRY (86 aa)). Residues 4699–4704 (GCARSE) carry the WDR5 interaction motif (WIN) motif. The SET domain occupies 4763–4879 (SNVYLARSRI…KGEELCYDYK (117 aa)). S-adenosyl-L-methionine-binding positions include Tyr4817 and 4840-4841 (NH). 4 residues coordinate Zn(2+): Cys4843, Cys4891, Cys4893, and Cys4898. The region spanning 4887–4903 (HKIPCHCGAVNCRKWMN) is the Post-SET domain.

It belongs to the class V-like SAM-binding methyltransferase superfamily. Histone-lysine methyltransferase family. TRX/MLL subfamily. In terms of assembly, component of the MLL3 complex (also named ASCOM complex), at least composed of catalytic subunit KMT2C/MLL3, ASH2L, RBBP5, WDR5, NCOA6, DPY30, KDM6A, PAXIP1/PTIP, PAGR1 and alpha- and beta-tubulin. Forms a core complex with the evolutionary conserved subcomplex WRAD composed of WDR5, RBBP5, ASH2L/ASH2 and DPY30 subunits; WRAD differentially stimulates the methyltransferase activity. Interacts (via WIN motif) with WDR5. In adult, detected in testis, kidney, spleen and lung, weakly expressed in brain and absent in heart and liver. First detected throughout the embryo at 8 dpc when expression is strong in forebrain neuroepithelium and absent in heart. Expressed in the eye lens between 10 and 14.5 dpc. By 13 dpc, expressed strongly in spinal cord, hand/foot plates and gonads.

Its subcellular location is the nucleus. The catalysed reaction is L-lysyl(4)-[histone H3] + S-adenosyl-L-methionine = N(6)-methyl-L-lysyl(4)-[histone H3] + S-adenosyl-L-homocysteine + H(+). In terms of biological role, histone methyltransferase that catalyzes methyl group transfer from S-adenosyl-L-methionine to the epsilon-amino group of 'Lys-4' of histone H3 (H3K4). Part of chromatin remodeling machinery predominantly forms H3K4me1 methylation marks at active chromatin sites where transcription and DNA repair take place. Likely plays a redundant role with KMT2D in enriching H3K4me1 mark on primed and active enhancer elements. The chain is Histone-lysine N-methyltransferase 2C (Kmt2c) from Mus musculus (Mouse).